Here is a 459-residue protein sequence, read N- to C-terminus: Mitochondrial distribution and morphology protein 10 (459 aa).

The protein belongs to the MDM10 family. In terms of assembly, component of the ER-mitochondria encounter structure (ERMES) or MDM complex, composed of MMM1, MDM10, MDM12 and MDM34. Associates with the mitochondrial outer membrane sorting assembly machinery SAM(core) complex.

It localises to the mitochondrion outer membrane. Functionally, component of the ERMES/MDM complex, which serves as a molecular tether to connect the endoplasmic reticulum and mitochondria. Components of this complex are involved in the control of mitochondrial shape and protein biogenesis and may function in phospholipid exchange. MDM10 is involved in the late assembly steps of the general translocase of the mitochondrial outer membrane (TOM complex). Functions in the TOM40-specific route of the assembly of outer membrane beta-barrel proteins, including the association of TOM40 with the receptor TOM22 and small TOM proteins. Can associate with the SAM(core) complex as well as the MDM12-MMM1 complex, both involved in late steps of the major beta-barrel assembly pathway, that is responsible for biogenesis of all outer membrane beta-barrel proteins. May act as a switch that shuttles between both complexes and channels precursor proteins into the TOM40-specific pathway. Plays a role in mitochondrial morphology and in the inheritance of mitochondria. The sequence is that of Mitochondrial distribution and morphology protein 10 from Clavispora lusitaniae (strain ATCC 42720) (Yeast).